A 562-amino-acid chain; its full sequence is Sensor histidine kinase MtrB (562 aa).

Transmembrane regions (helical) follow at residues 42-62 (VVAL…FVLT) and 213-233 (GTMA…ALLV). The HAMP domain maps to 235–287 (RQVVVPVRSASRIAERFAEGHLSERMPVRGEDDMARLAVSFNDMAESLSRQIT). The region spanning 302–519 (DVSHELRTPL…CFRLTLPLVR (218 aa)) is the Histidine kinase domain. The disordered stretch occupies residues 526–562 (SPLPMKPILQPSPQASTAGQQHGTQRQRLREHAERSR). A compositionally biased stretch (polar residues) spans 536–551 (PSPQASTAGQQHGTQR). Residues 553–562 (RLREHAERSR) show a composition bias toward basic and acidic residues.

The protein resides in the cell membrane. The enzyme catalyses ATP + protein L-histidine = ADP + protein N-phospho-L-histidine.. Functionally, member of the two-component regulatory system MtrA/MtrB. Seems to function as a membrane-associated protein kinase that phosphorylates MtrA in response to environmental signals. This is Sensor histidine kinase MtrB (mtrB) from Mycobacterium leprae (strain TN).